Consider the following 32-residue polypeptide: Tail virion protein G9P (32 aa).

Residues 8–24 traverse the membrane as a helical segment; it reads FASFVLGWCLRSGITYF.

It belongs to the inovirus G9P protein family.

The protein resides in the virion. It localises to the host membrane. In terms of biological role, may initiate with G7P the virion concomitant assembly-budding process, by interacting with the packaging signal of the viral genome. The assembly-budding takes place at the host inner membrane. In turn, G7P and G9P are present at the end of the filamentous virion that emerges first from the bacterial host. In Escherichia coli (Bacteriophage f1), this protein is Tail virion protein G9P (IX).